The chain runs to 502 residues: ATP synthase subunit alpha (502 aa).

169-176 lines the ATP pocket; the sequence is GDRQTGKT.

The protein belongs to the ATPase alpha/beta chains family. In terms of assembly, F-type ATPases have 2 components, CF(1) - the catalytic core - and CF(0) - the membrane proton channel. CF(1) has five subunits: alpha(3), beta(3), gamma(1), delta(1), epsilon(1). CF(0) has three main subunits: a(1), b(2) and c(9-12). The alpha and beta chains form an alternating ring which encloses part of the gamma chain. CF(1) is attached to CF(0) by a central stalk formed by the gamma and epsilon chains, while a peripheral stalk is formed by the delta and b chains.

It is found in the cell membrane. It carries out the reaction ATP + H2O + 4 H(+)(in) = ADP + phosphate + 5 H(+)(out). Its function is as follows. Produces ATP from ADP in the presence of a proton gradient across the membrane. The alpha chain is a regulatory subunit. In Clostridium perfringens (strain SM101 / Type A), this protein is ATP synthase subunit alpha.